The following is a 446-amino-acid chain: N-succinylarginine dihydrolase (446 aa).

Substrate contacts are provided by residues 19–28 (AGLSFGNVAS), N110, and 137–138 (HR). E174 is a catalytic residue. Substrate is bound at residue R213. H249 is an active-site residue. D251 and N364 together coordinate substrate. The active-site Nucleophile is C370.

The protein belongs to the succinylarginine dihydrolase family. As to quaternary structure, homodimer.

It carries out the reaction N(2)-succinyl-L-arginine + 2 H2O + 2 H(+) = N(2)-succinyl-L-ornithine + 2 NH4(+) + CO2. It functions in the pathway amino-acid degradation; L-arginine degradation via AST pathway; L-glutamate and succinate from L-arginine: step 2/5. In terms of biological role, catalyzes the hydrolysis of N(2)-succinylarginine into N(2)-succinylornithine, ammonia and CO(2). The sequence is that of N-succinylarginine dihydrolase from Burkholderia ambifaria (strain ATCC BAA-244 / DSM 16087 / CCUG 44356 / LMG 19182 / AMMD) (Burkholderia cepacia (strain AMMD)).